Reading from the N-terminus, the 598-residue chain is Elongation factor 4 (598 aa).

The 183-residue stretch at 2-184 folds into the tr-type G domain; the sequence is NNIRNFAIIA…AIVAKLPAPQ (183 aa). GTP-binding positions include 14 to 19 and 131 to 134; these read DHGKST and NKVD.

It belongs to the TRAFAC class translation factor GTPase superfamily. Classic translation factor GTPase family. LepA subfamily.

It is found in the cell membrane. It carries out the reaction GTP + H2O = GDP + phosphate + H(+). Functionally, required for accurate and efficient protein synthesis under certain stress conditions. May act as a fidelity factor of the translation reaction, by catalyzing a one-codon backward translocation of tRNAs on improperly translocated ribosomes. Back-translocation proceeds from a post-translocation (POST) complex to a pre-translocation (PRE) complex, thus giving elongation factor G a second chance to translocate the tRNAs correctly. Binds to ribosomes in a GTP-dependent manner. The chain is Elongation factor 4 from Wolbachia sp. subsp. Drosophila simulans (strain wRi).